We begin with the raw amino-acid sequence, 568 residues long: Protein phosphatase 1 regulatory inhibitor subunit 16B (568 aa).

The stretch at 15-55 (EKVPTLERLRAAQKRRAQQLKKWAQYEQDLLHRKRKHERKR) forms a coiled coil. The residue at position 69 (S69) is a Phosphoserine. ANK repeat units follow at residues 100–129 (DGLT…NVNA), 133–162 (ELWT…DLLA), 228–257 (QGAT…RVDV), and 261–290 (DGWE…SLSA). Phosphoserine occurs at positions 333, 337, and 350. Residues 373 to 403 (SAAEDQRTSTYNGDIRETRTDQENKDPNPRL) are disordered. The span at 386–403 (DIRETRTDQENKDPNPRL) shows a compositional bias: basic and acidic residues. The residue at position 477 (S477) is a Phosphoserine. Residues 505 to 517 (SSVARSGESSSEG) are compositionally biased toward low complexity. Residues 505–527 (SSVARSGESSSEGKAPLIGGRTS) are disordered. The stretch at 531–560 (SNGTSVYYTVTSGDPPLLKFKAPMEEMEEK) is one ANK 5 repeat. C564 carries the S-palmitoyl cysteine lipid modification. C565 carries the cysteine methyl ester modification. C565 carries the S-farnesyl cysteine lipid modification. Residues 566-568 (RIS) constitute a propeptide, removed in mature form.

In terms of assembly, interacts with PPP1CA, PPP1CB and MSN. Interacts (via its fourth ankyrin repeat) with the mature dimeric form of RPSA/LAMR1. Interacts with EEF1A1. Interacts with PTEN. Interacts with ECE1. In terms of processing, phosphorylated by PKA and, after PKA priming, by GSK3B. Phosphorylation by GSK3B reduces its association with PP1C and enhances PP1C activity. Dephosphorylation by its associated PP1C results in enhanced association with PP1C, but reduced PP1C activity.

It localises to the cell membrane. The protein localises to the nucleus. The protein resides in the cell projection. Functionally, regulator of protein phosphatase 1 (PP1) that acts as a positive regulator of pulmonary endothelial cell (EC) barrier function. Protects the endothelial barrier from lipopolysaccharide (LPS)-induced vascular leakage. Involved in the regulation of the PI3K/AKT signaling pathway. Involved in the regulation of angiogenesis and endothelial cell proliferation through the control of ECE1 dephosphorylation, trafficking and activity. Involved in the regulation of endothelial cell filopodia extension. May be a downstream target for TGF-beta1 signaling cascade in endothelial cells. Involved in PKA-mediated moesin dephosphorylation which is important in EC barrier protection against thrombin stimulation. Promotes the interaction of PPP1CA with RPSA/LAMR1 and in turn facilitates the dephosphorylation of RPSA/LAMR1. Involved in the dephosphorylation of EEF1A1. The sequence is that of Protein phosphatase 1 regulatory inhibitor subunit 16B (Ppp1r16b) from Mus musculus (Mouse).